Consider the following 320-residue polypeptide: MNKNLEANRNRTLSEGIHKNIKVRAPKIDKTAISPYDRYCDGYGMPGAYGNGYVSVLKVSVGTVKKTDDILLDGIVSYDRAEINDAYVGQINMLTASSFCGVAGQVWGHDLATHDSIAKDEIKPLYELKQFDGTPLKVYDAKPLLEAGIELFGTEKNRRFTTAPGAHVICANKSATAYRPKENRPLKEGEAYGVWSFIALSLSNDRDHCADLFIEDAGLWTKNDNPEDLKKFLEDHRKAVTWSVVECGRDSHVVFERTYIGFAYVIMKPGEIGNALTCAPYVTLARDAVPSEGFPSLNRISLSQWLDDMNFDSLVNPSKK.

Positions 2 to 11 (NKNLEANRNR) are excised as a propeptide. Residue Ser-98 is modified to Pyruvic acid (Ser). Glu-215 functions as the Proton donor in the catalytic mechanism.

In terms of assembly, the proenzyme is a hexamer of identical pi chains; each pi chain monomer is cleaved to form a small (or beta) chain and a large (or alpha) chain by non-hydrolytic self-catalysis. It depends on pyruvate as a cofactor.

The catalysed reaction is L-histidine + H(+) = histamine + CO2. The polypeptide is Histidine decarboxylase proenzyme (hdc) (Clostridium perfringens (strain 13 / Type A)).